The chain runs to 194 residues: MKNIILASASERRQELLKRILEDFQIIVSDFDESSIPFKDNIPSYVMNLAEGKARSVSKKIMDQDSNLVIGCDTLVAFNNKVLGKPKDKKDAFEMLQALSGNEHEVYSGLAILDVKSNKIITDFVCTKVKFSKLTSLQIEKYINTGDPMDKAGAYGIQGKAGVFVENINGCYYNVVGLPLNKLNSMLMEMGVNL.

The Proton acceptor role is filled by aspartate 73.

Belongs to the Maf family. YhdE subfamily. The cofactor is a divalent metal cation.

Its subcellular location is the cytoplasm. The enzyme catalyses dTTP + H2O = dTMP + diphosphate + H(+). It carries out the reaction UTP + H2O = UMP + diphosphate + H(+). Its function is as follows. Nucleoside triphosphate pyrophosphatase that hydrolyzes dTTP and UTP. May have a dual role in cell division arrest and in preventing the incorporation of modified nucleotides into cellular nucleic acids. This Clostridium botulinum (strain 657 / Type Ba4) protein is dTTP/UTP pyrophosphatase.